The sequence spans 769 residues: MAKETFSIEFAGRTLTVETGQVAKQANGAVVVRYGDTTVLTAATMGKMATGDFFPLQVNYEEKMYAAGKFPGGFNKREARPSTDATLTARLIDRPIRPMFAEGFRNEVQVINTVLSYDENASGRVAAMFGSSLALAISDIPFDGPIAGVEVAYIDGKYVINPTVAEKESSSLELSVAGNINAINMVESGAKELSEEVMLGALLAGHNAVKELIEFQNEIVAKVGKEKAEVELLHVDEDLKAEVIAAYNSDLQKAVQVEEKLAREAATKAVKEAIISVYSAKYENDENLSIILRDLAEILEGMEHAEVRRLITEDKIRPDGRKIDEIRPLDAEIDFTPRSITHGTGLFTRGQTQALSTLTLAPMNEAQIIDGLNDEYKKRFMHHYNFPQYSVGETGRYGAPGRREIGHGALGERALEQVLPSLEEFPYAIRLVAEVLESNGSSSQASICAGTLALMAGGVPIKAPVAGIAMGLISDGTNYTVLTDIQGLEDHFGDMDFKVAGTREGITALQMDIKISGITPEILAEALAQAKTARFQILDVIEATIAQPREELAPSAPKIDTIMIPVDKIKVVIGKGGEQIDKIIAETGVKIDIDDEGLCSIFSSDQSAIDRAKEIIAELVREAKVGEVYEAKVVRIESFGAFVNLFGKQDAMVHISEMAWARTAKVEDVMKLGDVVKVKIMKIDDKGRVDASMRALVEKPEGYVEPERKPRERRDNKDRRNGNGFDRRNNDRNNHNNHNNNSGNHSFELRERKSHVDHEFPELSTKKPE.

Mg(2+) contacts are provided by aspartate 490 and aspartate 496. One can recognise a KH domain in the interval 557–616; it reads PKIDTIMIPVDKIKVVIGKGGEQIDKIIAETGVKIDIDDEGLCSIFSSDQSAIDRAKEII. Residues 626-694 enclose the S1 motif domain; it reads GEVYEAKVVR…DKGRVDASMR (69 aa). The span at 700–734 shows a compositional bias: basic and acidic residues; that stretch reads PEGYVEPERKPRERRDNKDRRNGNGFDRRNNDRNN. The segment at 700–769 is disordered; that stretch reads PEGYVEPERK…FPELSTKKPE (70 aa). A compositionally biased stretch (low complexity) spans 736 to 746; the sequence is NNHNNNSGNHS. Positions 747–769 are enriched in basic and acidic residues; that stretch reads FELRERKSHVDHEFPELSTKKPE.

This sequence belongs to the polyribonucleotide nucleotidyltransferase family. Mg(2+) serves as cofactor.

The protein localises to the cytoplasm. The enzyme catalyses RNA(n+1) + phosphate = RNA(n) + a ribonucleoside 5'-diphosphate. In terms of biological role, involved in mRNA degradation. Catalyzes the phosphorolysis of single-stranded polyribonucleotides processively in the 3'- to 5'-direction. This is Polyribonucleotide nucleotidyltransferase from Lactococcus lactis subsp. cremoris (strain SK11).